The following is a 55-amino-acid chain: uncharacterized protein (55 aa).

2 helical membrane passes run Leu5–Met25 and Leu26–Leu46.

It is found in the cell membrane. This is an uncharacterized protein from Bacillus subtilis (strain 168).